Reading from the N-terminus, the 253-residue chain is Testis-expressed protein 101 (253 aa).

An N-terminal signal peptide occupies residues 1 to 24 (MAACWVHYLLLLLLGVSHQTLAQS). N-linked (GlcNAc...) asparagine glycosylation is found at N44, N112, N117, N121, and N162. The UPAR/Ly6 1 domain occupies 53–117 (ETCNPGELCQ…SNYCNSSLCN (65 aa)). The region spanning 143-218 (CPTCVALGSC…KETCSYHSLL (76 aa)) is the UPAR/Ly6 2 domain. A lipid anchor (GPI-anchor amidated serine) is attached at S226. The propeptide at 227-253 (RASGRSTSLWVLELLLPAVLVALTHFP) is removed in mature form.

In terms of assembly, interacts with VAMP3. Interacts with LY6K. Interacts with DPEP3; co-localized on the cell surface of spermatocytes, spermatids, and testicular spermatozoa, co-localized only in cytoplasmic droplets of caput and corpus epididymal sperm. Interacts with ADAM5. In terms of processing, N-glycosylated; by high mannose and/or biantennary complex and/or certain types of hybrid oligosaccharides; possesses different oligosaccharides chains according to its subcellular localization in the testis. Sheds from membrane raft by ACE and released from the cell surface of epididymal sperm while it passes through the caput epididymis leading to disappearance of TEX101 on spermatozoa; is essential to produce fertile spermatozoa.

Its subcellular location is the cell membrane. The protein resides in the membrane raft. It localises to the cytoplasmic vesicle. It is found in the secretory vesicle. The protein localises to the acrosome. Its subcellular location is the secreted. Plays a role in fertilization by controlling binding of sperm to zona pellucida and migration of spermatozoa into the oviduct. May play a role in signal transduction and promote protein tyrosine phosphorylation. The chain is Testis-expressed protein 101 from Cricetulus griseus (Chinese hamster).